We begin with the raw amino-acid sequence, 621 residues long: Exonuclease 3'-5' domain-containing protein 2 (621 aa).

Residues 1–4 are Mitochondrial intermembrane-facing; the sequence is MSRQ. A helical membrane pass occupies residues 5–25; that stretch reads NLVALTVTTLLGVAVGGFVLW. Residues 26–621 lie on the Cytoplasmic side of the membrane; sequence KGIQRRRRSK…FGEDLPIQLS (596 aa). Residues 34–68 are disordered; the sequence is SKTSPVTQQPQQKVLGSRELPPPEDDQLHSSAPRS. Residues 36-47 show a composition bias toward polar residues; the sequence is TSPVTQQPQQKV. Positions 108, 110, and 246 each coordinate a divalent metal cation. The 93-residue stretch at 155–247 folds into the 3'-5' exonuclease domain; the sequence is ILADGTILKV…DQVIYAARDA (93 aa). Residues 299 to 343 form a disordered region; sequence RLGEEVNGEATESQQKPRNKKSKMDGMVPGNHQGRDPRKHKRKPL.

The protein belongs to the EXD2 family. As to quaternary structure, homodimer. Interacts with RBBP8, MRE11 and BRCA1. Mg(2+) serves as cofactor. The cofactor is Mn(2+).

Its subcellular location is the mitochondrion outer membrane. The protein localises to the mitochondrion matrix. It is found in the nucleus. The protein resides in the chromosome. It catalyses the reaction Exonucleolytic cleavage in the 3'- to 5'-direction to yield nucleoside 5'-phosphates.. In terms of biological role, exonuclease that has both 3'-5' exoribonuclease and exodeoxyribonuclease activities, depending on the divalent metal cation used as cofactor. In presence of Mg(2+), only shows 3'-5' exoribonuclease activity, while it shows both exoribonuclease and exodeoxyribonuclease activities in presence of Mn(2+). Acts as an exoribonuclease in mitochondrion, possibly by regulating ATP production and mitochondrial translation. Also involved in the response to DNA damage. Acts as 3'-5' exodeoxyribonuclease for double-strand breaks resection and efficient homologous recombination. Plays a key role in controlling the initial steps of chromosomal break repair, it is recruited to chromatin in a damage-dependent manner and functionally interacts with the MRN complex to accelerate resection through its 3'-5' exonuclease activity, which efficiently processes double-stranded DNA substrates containing nicks. Also involved in response to replicative stress: recruited to stalled forks and is required to stabilize and restart stalled replication forks by restraining excessive fork regression, thereby suppressing their degradation. This is Exonuclease 3'-5' domain-containing protein 2 from Homo sapiens (Human).